The chain runs to 427 residues: A-adding tRNA nucleotidyltransferase (427 aa).

Position 49–52 (49–52 (GTVR)) interacts with ATP. Mg(2+) contacts are provided by aspartate 62 and aspartate 64. Residues 136–137 (RD), asparagine 141, 181–190 (DPTRLLRGVR), arginine 194, and arginine 225 contribute to the ATP site.

It belongs to the tRNA nucleotidyltransferase/poly(A) polymerase family. Mg(2+) serves as cofactor.

The catalysed reaction is a tRNA with a 3' CC end + ATP = a tRNA with a 3' CCA end + diphosphate. In terms of biological role, tRNA nucleotidyltransferase involved in the synthesis of the tRNA CCA terminus. Adds the terminal adenosine residue to tRNA. This Halalkalibacterium halodurans (strain ATCC BAA-125 / DSM 18197 / FERM 7344 / JCM 9153 / C-125) (Bacillus halodurans) protein is A-adding tRNA nucleotidyltransferase.